The chain runs to 276 residues: Diaminopimelate epimerase (276 aa).

Asn13, Gln46, and Asn66 together coordinate substrate. Catalysis depends on Cys75, which acts as the Proton donor. Residues 76 to 77 (GN), Asn159, Asn192, and 210 to 211 (ER) contribute to the substrate site. Cys219 serves as the catalytic Proton acceptor. A substrate-binding site is contributed by 220 to 221 (GS).

Belongs to the diaminopimelate epimerase family. In terms of assembly, homodimer.

The protein localises to the cytoplasm. It carries out the reaction (2S,6S)-2,6-diaminopimelate = meso-2,6-diaminopimelate. It functions in the pathway amino-acid biosynthesis; L-lysine biosynthesis via DAP pathway; DL-2,6-diaminopimelate from LL-2,6-diaminopimelate: step 1/1. Its function is as follows. Catalyzes the stereoinversion of LL-2,6-diaminopimelate (L,L-DAP) to meso-diaminopimelate (meso-DAP), a precursor of L-lysine and an essential component of the bacterial peptidoglycan. The chain is Diaminopimelate epimerase from Pseudoalteromonas atlantica (strain T6c / ATCC BAA-1087).